The chain runs to 251 residues: CDP-diacylglycerol pyrophosphatase (251 aa).

The chain crosses the membrane as a helical span at residues Ala-4–Trp-24.

It belongs to the Cdh family.

Its subcellular location is the cell inner membrane. The catalysed reaction is a CDP-1,2-diacyl-sn-glycerol + H2O = a 1,2-diacyl-sn-glycero-3-phosphate + CMP + 2 H(+). It participates in phospholipid metabolism; CDP-diacylglycerol degradation; phosphatidate from CDP-diacylglycerol: step 1/1. The protein is CDP-diacylglycerol pyrophosphatase of Escherichia coli (strain K12 / MC4100 / BW2952).